We begin with the raw amino-acid sequence, 275 residues long: NH(3)-dependent NAD(+) synthetase (275 aa).

46–53 (GISGGQDS) contacts ATP. D52 contacts Mg(2+). Residue R140 participates in deamido-NAD(+) binding. T160 is a binding site for ATP. E165 is a Mg(2+) binding site. Positions 173 and 180 each coordinate deamido-NAD(+). Positions 189 and 211 each coordinate ATP. Residue 260–261 (HK) participates in deamido-NAD(+) binding.

This sequence belongs to the NAD synthetase family. As to quaternary structure, homodimer.

The enzyme catalyses deamido-NAD(+) + NH4(+) + ATP = AMP + diphosphate + NAD(+) + H(+). It functions in the pathway cofactor biosynthesis; NAD(+) biosynthesis; NAD(+) from deamido-NAD(+) (ammonia route): step 1/1. Its function is as follows. Catalyzes the ATP-dependent amidation of deamido-NAD to form NAD. Uses ammonia as a nitrogen source. The sequence is that of NH(3)-dependent NAD(+) synthetase from Salmonella choleraesuis (strain SC-B67).